A 384-amino-acid polypeptide reads, in one-letter code: Histidinol-phosphate aminotransferase 2 (384 aa).

The residue at position 236 (K236) is an N6-(pyridoxal phosphate)lysine.

The protein belongs to the class-II pyridoxal-phosphate-dependent aminotransferase family. Histidinol-phosphate aminotransferase subfamily. As to quaternary structure, homodimer. The cofactor is pyridoxal 5'-phosphate.

It catalyses the reaction L-histidinol phosphate + 2-oxoglutarate = 3-(imidazol-4-yl)-2-oxopropyl phosphate + L-glutamate. It functions in the pathway amino-acid biosynthesis; L-histidine biosynthesis; L-histidine from 5-phospho-alpha-D-ribose 1-diphosphate: step 7/9. This is Histidinol-phosphate aminotransferase 2 (hisC2) from Nostoc sp. (strain PCC 7120 / SAG 25.82 / UTEX 2576).